The sequence spans 427 residues: Nuclear distribution protein PAC1-2 (427 aa).

Residues 8–40 (QKDDLNKSIAEYLYAQDLTEIADSLCARLSLDY) enclose the LisH domain. Positions 58–82 (SVIRLQKKLIESENRYTALQEDIAA) form a coiled coil. WD repeat units lie at residues 106–147 (SHRA…RTLK), 149–187 (HTREVWGVDFDSKGSFLATCSSDLSIKVWDTQQWDNAGY), 194–233 (GHEHTVSTVKFLPGDDLIASASRDKTIRIWEVATTFCIRT), 236–275 (GHEDWVRMTVPSTDGTLLGSCSSDNTARVWDPTSGVMKME), 278–336 (GHGH…ELRT), 339–378 (GHNDWIRGLVFHPSGKHLLSASDDKTIRVWELSTGRCMXV), and 381–420 (AHSHFITCLAWGPPVSAVARVELPRTPFCGDPKPIASRIM).

The protein belongs to the WD repeat LIS1/nudF family. Self-associates. Interacts with NDL1 and dynein.

The protein resides in the cytoplasm. It is found in the cytoskeleton. Its subcellular location is the spindle pole. Its function is as follows. Positively regulates the activity of the minus-end directed microtubule motor protein dynein. May enhance dynein-mediated microtubule sliding by targeting dynein to the microtubule plus end. Required for nuclear migration during vegetative growth as well as development. Required for retrograde early endosome (EE) transport from the hyphal tip. Required for localization of dynein to the mitotic spindle poles. Recruits additional proteins to the dynein complex at SPBs. The protein is Nuclear distribution protein PAC1-2 of Postia placenta (strain ATCC 44394 / Madison 698-R) (Brown rot fungus).